Reading from the N-terminus, the 536-residue chain is MTAPKNSIDLSQYGIDDVNEVVYNPSYELLFSEETKAGLEGFDKGIVTELGAVNVDTGIFTGRSPKDKYIVRDDVTRDTVWWSDQGKNDNKAMTPETWDHLKGLVTTQLSGQRLFVVDTFCGADEATRLKVRFITQVAWQAHFVKNMFIRPTDAELENYEPDFVVMNGAKTVNDKWEEQGLNSENFVAFNLTEKIQLIGGTWYGGEMKKGMFSMMNYYLPLQGIASMHCSANVGEDGDTAIFFGLSGTGKTTLSTDPKRQLIGDDEHGWDDNGVFNFEGGCYAKTINLSKENEPDIYNAIRRDALLENVTVDANGKIDFDDNSKTENTRVSYPIHHIDNIVKPVSRAGHAKKVIFLTADAFGVLPPVAKLTPEQTEYYFLSGFTAKLAGTERGITEPTPTFSSCFGAAFLSLHPTQYAEVLHKRMDDAGAEAYLVNTGWNGTGKRISIKATRAIIDAILDGSIDNAETETVPFFNLEVPKVIAGVEGDILDPRNTYEDPSVWNDKAVDLAKRFVNNFDKFTDTDNGKALVAAGPQL.

Residues arginine 63, tyrosine 203, and lysine 209 each coordinate substrate. ATP-binding positions include lysine 209, histidine 228, and glycine 244 to threonine 252. Lysine 209 and histidine 228 together coordinate Mn(2+). Aspartate 265 serves as a coordination point for Mn(2+). ATP-binding positions include glutamate 293, arginine 329, arginine 445 to isoleucine 446, and threonine 451. A substrate-binding site is contributed by arginine 329.

The protein belongs to the phosphoenolpyruvate carboxykinase (ATP) family. Monomer. It depends on Mn(2+) as a cofactor.

It localises to the cytoplasm. The enzyme catalyses oxaloacetate + ATP = phosphoenolpyruvate + ADP + CO2. It participates in carbohydrate biosynthesis; gluconeogenesis. Involved in the gluconeogenesis. Catalyzes the conversion of oxaloacetate (OAA) to phosphoenolpyruvate (PEP) through direct phosphoryl transfer between the nucleoside triphosphate and OAA. This is Phosphoenolpyruvate carboxykinase (ATP) from Colwellia psychrerythraea (strain 34H / ATCC BAA-681) (Vibrio psychroerythus).